Consider the following 83-residue polypeptide: Small ribosomal subunit protein uS17 (83 aa).

The protein belongs to the universal ribosomal protein uS17 family. In terms of assembly, part of the 30S ribosomal subunit.

In terms of biological role, one of the primary rRNA binding proteins, it binds specifically to the 5'-end of 16S ribosomal RNA. In Synechococcus sp. (strain RCC307), this protein is Small ribosomal subunit protein uS17.